The following is a 288-amino-acid chain: Pyridoxal kinase PdxY (288 aa).

Substrate contacts are provided by residues Ser12 and Thr47 to Gln48. ATP is bound by residues Asp114, Glu151, Lys184, and Arg211–Leu214. Asp225 contributes to the substrate binding site.

This sequence belongs to the pyridoxine kinase family. PdxY subfamily. In terms of assembly, homodimer. Mg(2+) is required as a cofactor.

It catalyses the reaction pyridoxal + ATP = pyridoxal 5'-phosphate + ADP + H(+). It participates in cofactor metabolism; pyridoxal 5'-phosphate salvage; pyridoxal 5'-phosphate from pyridoxal: step 1/1. Its function is as follows. Pyridoxal kinase involved in the salvage pathway of pyridoxal 5'-phosphate (PLP). Catalyzes the phosphorylation of pyridoxal to PLP. In Pseudomonas syringae pv. syringae (strain B728a), this protein is Pyridoxal kinase PdxY.